A 754-amino-acid chain; its full sequence is ToMV susceptible protein tm-1(GCR26) (754 aa).

Residues 1–201 (MATAQSNSPR…AGMVIGRLES (201 aa)) are N-terminal inhibitory domain NN. ATP contacts are provided by residues 18–20 (DTK), Thr55, Arg92, and 124–127 (GSGG). The segment at 211-431 (KFTVGVTMFG…VDSFLEMSPK (221 aa)) is N-terminal inhibitory domain NC.

It belongs to the UPF0261 family. In terms of assembly, homodimer. As to quaternary structure, (Microbial infection) Binds, via an ATP bridge, to the tobamoviruses avirulent (Avr) replication proteins (large and small subunits, e.g. tobacco mild green mosaic virus (TMGMV) AC P18339 and pepper mild mottle virus (PMMoV) AC P89657) to inhibit their function after the translation of tobamoviruses RNA, but before the viral replication complex formation on the membrane surfaces; this interaction is not possible with resistance-breaking strains replication proteins.

Inhibitor of viral RNA replication which confers resistance to some tobamoviruses including tobacco mild green mosaic virus (TMGMV) and pepper mild mottle virus (PMMoV), but not to tomato mosaic virus (ToMV strains L, ToMV0 and ToMV1-2) and tobacco mosaic virus (TMV). Prevents tobamoviruses RNA replication by affecting the association of tobamoviruses replication proteins (large and small subunits) with host membrane-associated proteins (e.g. TOM1, TOM2A and ARL8), thus inhibiting the replication complex formation on the membranes and avoiding viral negative-strand RNA synthesis. The polypeptide is ToMV susceptible protein tm-1(GCR26) (Solanum lycopersicum (Tomato)).